The sequence spans 598 residues: Pescadillo homolog (598 aa).

Residues 296 to 317 (QAMKADSKDKDDNSNDEAPENV) form a disordered region. Positions 345 to 439 (PTATLFEDFV…ELLSANLYLP (95 aa)) constitute a BRCT domain. 3 disordered regions span residues 452-501 (DALG…EDVE), 515-544 (GIAY…EDEE), and 564-598 (MKYS…VEKK). Positions 463–485 (ESEDESSDSSEESDSEIENEEED) are enriched in acidic residues. 3 stretches are compositionally biased toward basic and acidic residues: residues 520–532 (KAKD…DVAS), 570–579 (QKEDKIEELK), and 586–598 (AKKE…VEKK). The stretch at 557 to 598 (QRKLYKKMKYSNQQKEDKIEELKKKKKQLAKKEKTLKKVEKK) forms a coiled coil.

It belongs to the pescadillo family. As to quaternary structure, component of the NOP7 complex, composed of ERB1, NOP7 and YTM1. The complex is held together by ERB1, which interacts with NOP7 via its N-terminal domain and with YTM1 via a high-affinity interaction between the seven-bladed beta-propeller domains of the 2 proteins. The NOP7 complex associates with the 66S pre-ribosome.

The protein resides in the nucleus. It is found in the nucleolus. It localises to the nucleoplasm. Component of the NOP7 complex, which is required for maturation of the 25S and 5.8S ribosomal RNAs and formation of the 60S ribosome. The chain is Pescadillo homolog from Candida glabrata (strain ATCC 2001 / BCRC 20586 / JCM 3761 / NBRC 0622 / NRRL Y-65 / CBS 138) (Yeast).